A 184-amino-acid polypeptide reads, in one-letter code: dCTP deaminase (184 aa).

Residue 107 to 112 (KSTYAR) coordinates dCTP. Catalysis depends on glutamate 133, which acts as the Proton donor/acceptor. Glutamine 152, tyrosine 166, and glutamine 176 together coordinate dCTP.

This sequence belongs to the dCTP deaminase family. Homotrimer.

The catalysed reaction is dCTP + H2O + H(+) = dUTP + NH4(+). The protein operates within pyrimidine metabolism; dUMP biosynthesis; dUMP from dCTP (dUTP route): step 1/2. Functionally, catalyzes the deamination of dCTP to dUTP. This Acidiphilium cryptum (strain JF-5) protein is dCTP deaminase.